Reading from the N-terminus, the 201-residue chain is LexA repressor (201 aa).

The segment at residues 29-49 is a DNA-binding region (H-T-H motif); that stretch reads VREICKAVGLSSTSSVHFHLK. Catalysis depends on for autocatalytic cleavage activity residues serine 125 and lysine 162.

This sequence belongs to the peptidase S24 family. Homodimer.

It carries out the reaction Hydrolysis of Ala-|-Gly bond in repressor LexA.. Functionally, represses a number of genes involved in the response to DNA damage (SOS response), including recA and lexA. In the presence of single-stranded DNA, RecA interacts with LexA causing an autocatalytic cleavage which disrupts the DNA-binding part of LexA, leading to derepression of the SOS regulon and eventually DNA repair. The protein is LexA repressor of Clostridium botulinum (strain 657 / Type Ba4).